Here is a 287-residue protein sequence, read N- to C-terminus: Nucleotide-binding protein mma_3120 (287 aa).

8 to 15 serves as a coordination point for ATP; the sequence is GISGSGKS. 57–60 contacts GTP; sequence DARS.

The protein belongs to the RapZ-like family.

Functionally, displays ATPase and GTPase activities. The polypeptide is Nucleotide-binding protein mma_3120 (Janthinobacterium sp. (strain Marseille) (Minibacterium massiliensis)).